Here is a 2181-residue protein sequence, read N- to C-terminus: Genome polyprotein (2181 aa).

G80 carries the N-myristoyl glycine; by host lipid modification. Interaction with host receptor ANTXR1 regions lie at residues 316-337 (DYRT…PPNW) and 761-772 (RFGLYANPSGSG). The region spanning 1165–1333 (LGKTNLAQSL…YKKHTRLNFD (169 aa)) is the SF3 helicase domain. Position 1197-1204 (1197-1204 (GKPGCGKS)) interacts with ATP. Residues 1472-1500 (EETESEGSVKAPRSENAYDGPKKNSKPPG) are disordered. Y1489 bears the O-(5'-phospho-RNA)-tyrosine mark. Positions 1511–1704 (NVDMGFEAAV…AGTYISKLGL (194 aa)) constitute a Peptidase C3 domain. H1556 serves as the catalytic For protease 3C activity and deubiquitinase activity. D1592 (for protease 3C activity) is an active-site residue. C1668 acts as the For protease 3C activity and deubiquitinase activity in catalysis. The RdRp catalytic domain occupies 1950 to 2068 (KNTYDVDYSA…GTDYDLDFNE (119 aa)). Residues D1956 and D2054 each act as for RdRp activity in the active site.

In terms of assembly, interacts with host entry receptor ANTRX1. Interacts with host IRF3; this interaction is involved in the suppression of IRF3 and IRF7 expression and phosphorylation by the virus. Interacts with host IRF7; this interaction is involved in the suppression of IRF3 and IRF7 expression and phosphorylation by the virus. Interacts with host MAVS; this interaction allows the cleavage of MAVS and subsequent suppression of host immunity. Interacts with host TRIF; this interaction allows the cleavage of TRIF and subsequent suppression of host immunity. Interacts with host TANK; this interaction allows the cleavage of TANK and subsequent suppression of host immunity. Interacts with host RIGI. Interacts with host TBK1. Interacts with host TRAF3. In terms of processing, specific enzymatic cleavages by the viral protease in vivo yield a variety of precursors and mature proteins. The polyprotein seems to be cotranslationally cleaved at the 2A/2B junction by a ribosomal skip from one codon to the next without formation of a peptide bond. This process would release the P1-2A peptide from the translational complex. During virion maturation, immature virions are rendered infectious following cleavage of VP0 into VP4 and VP2. This maturation seems to be an autocatalytic event triggered by the presence of RNA in the capsid and is followed by a conformational change of the particle. Post-translationally, myristoylation is required during RNA encapsidation and formation of the mature virus particle. In terms of processing, uridylylated by the polymerase and is covalently linked to the 5'-end of genomic RNA. This uridylylated form acts as a nucleotide-peptide primer for the polymerase.

It is found in the virion. Its subcellular location is the host cytoplasm. The protein localises to the host nucleus. It localises to the host nucleolus. The protein resides in the host cytoplasmic vesicle membrane. The catalysed reaction is RNA(n) + a ribonucleoside 5'-triphosphate = RNA(n+1) + diphosphate. The enzyme catalyses Selective cleavage of Gln-|-Gly bond in the poliovirus polyprotein. In other picornavirus reactions Glu may be substituted for Gln, and Ser or Thr for Gly.. It catalyses the reaction Thiol-dependent hydrolysis of ester, thioester, amide, peptide and isopeptide bonds formed by the C-terminal Gly of ubiquitin (a 76-residue protein attached to proteins as an intracellular targeting signal).. It carries out the reaction ATP + H2O = ADP + phosphate + H(+). In terms of biological role, forms an icosahedral capsid of pseudo T=3 symmetry with capsid proteins VP2 and VP3. Together they form an icosahedral capsid composed of 60 copies of each VP1, VP2, and VP3, with a diameter of approximately 325 Angstroms. VP4 lies on the inner surface of the protein shell formed by VP1, VP2 and VP3. All the three latter proteins contain a beta-sheet structure called beta-barrel jelly roll. VP1 is situated at the 12 fivefold axes, whereas VP2 and VP3 are located at the quasi-sixfold axes. Binds the host receptor ANTXR1 for attachment and uncoating (entry). Functionally, forms an icosahedral capsid of pseudo T=3 symmetry with capsid proteins VP2 and VP3. Together they form an icosahedral capsid composed of 60 copies of each VP1, VP2, and VP3, with a diameter of approximately 270 Angstroms. VP4 lies on the inner surface of the protein shell formed by VP1, VP2 and VP3. All the three latter proteins contain a beta-sheet structure called beta-barrel jelly roll. VP1 is situated at the 12 fivefold axes, whereas VP2 and VP3 are located at the quasi-sixfold axes. Binds the host receptor ANTXR1 for attachment and uncoating (entry). Its function is as follows. Forms an icosahedral capsid of pseudo T=3 symmetry with capsid proteins VP2 and VP3. Together they form an icosahedral capsid composed of 60 copies of each VP1, VP2, and VP3, with a diameter of approximately 270 Angstroms. VP4 lies on the inner surface of the protein shell formed by VP1, VP2 and VP3. All the three latter proteins contain a beta-sheet structure called beta-barrel jelly roll. VP1 is situated at the 12 fivefold axes, whereas VP2 and VP3 are located at the quasi-sixfold axes. Vp3 also seems to be involved in the binding to host receptor ANTXR1 for attachment and uncoating (entry). Lies on the inner surface of the capsid shell. After binding to the host receptor, the capsid undergoes conformational changes. Capsid protein VP4 is released, capsid protein VP1 N-terminus is externalized, and together, they shape a pore in the host membrane through which the viral genome is translocated into the host cell cytoplasm. After genome has been released, the channel shrinks. In terms of biological role, VP0 precursor is a component of immature procapsids. Functionally, mediates self-processing of the polyprotein by a translational effect termed 'ribosome skipping'. Mechanistically, 2A-mediated cleavage occurs between the C-terminal glycine and the proline of the downstream protein 2B. Its function is as follows. Plays an essential role in the virus replication cycle by acting as a viroporin. Creates a pore in the host endoplasmic reticulum and as a consequence releases Ca2+ in the cytoplasm of infected cell. In turn, high levels of cytoplasmic calcium may trigger membrane trafficking and transport of viral ER-associated proteins to viroplasms, sites of viral genome replication. Associates with and induces structural rearrangements of intracellular membranes. In terms of biological role, covalently linked to the 5'-end of both the positive-strand and negative-strand genomic RNAs. Acts as a genome-linked replication primer. Functionally, cysteine protease that generates mature viral proteins from the precursor polyprotein. Inactivates crucial host adapter molecules in order to suppress antiviral type-I interferon (type-I IFN) and NF-kappaB production to escape host antiviral innate immune responses. Deubiquitinase that acts on both lysine-48- and lysine-63-linked polyubiquitin chains and inhibits the ubiquitination of the ATP-dependent RNA helicase RIGI, TANK-binding kinase 1 (TBK1), and TNF receptor-associated factor 3 (TRAF3), thereby blocking the expression of IFN-beta and IFN stimulated gene 54 (ISG54). Induces host IRF3 and IRF7 degradation thereby suppressing IRF3- and IRF7-induced type-I IFN production. Also decreases host IRF3 phosphorylation leading to negligible IRF3 activation. Cleaves host MAVS, TRIF and TANK, which are then unable to regulate pattern recognition receptor (PRR)-mediated type-I IFN production. Inhibits the integrated stress response (ISR) in the infected cell by disrupting eIF4GI-G3BP1 interaction. Stress granule formation is thus inhibited. Its function is as follows. Replicates the genomic and antigenomic RNAs by recognizing replications specific signals. Performs VPg uridylylation. The sequence is that of Genome polyprotein from Sus scrofa (Pig).